Here is a 67-residue protein sequence, read N- to C-terminus: Small ribosomal subunit protein eS31 (67 aa).

C31, C34, C49, and C52 together coordinate Zn(2+). The segment at 31 to 52 (CPKCGAGVFMAEHLNRFACGKC) adopts a C4-type zinc-finger fold.

It belongs to the eukaryotic ribosomal protein eS31 family. In terms of assembly, part of the 30S ribosomal subunit. Zn(2+) is required as a cofactor.

The sequence is that of Small ribosomal subunit protein eS31 from Methanococcus maripaludis (strain C5 / ATCC BAA-1333).